We begin with the raw amino-acid sequence, 469 residues long: Nuclear hormone receptor family member nhr-154 (469 aa).

Residues 80 to 159 constitute a DNA-binding region (nuclear receptor); the sequence is PSKCLVCRNP…VGMNPMAIQA (80 aa). 2 consecutive NR C4-type zinc fingers follow at residues 83–103 and 119–142; these read CLVC…CNGC and CAKQ…CRAC. The region spanning 230–459 is the NR LBD domain; it reads LDSKPVLVVT…KMGTTFRKCI (230 aa).

It belongs to the nuclear hormone receptor family.

Its subcellular location is the nucleus. In terms of biological role, orphan nuclear receptor. This chain is Nuclear hormone receptor family member nhr-154 (nhr-154), found in Caenorhabditis elegans.